Reading from the N-terminus, the 394-residue chain is 1-deoxy-D-xylulose 5-phosphate reductoisomerase (394 aa).

Thr-6, Gly-7, Ser-8, Ile-9, Ala-32, and Asn-124 together coordinate NADPH. A 1-deoxy-D-xylulose 5-phosphate-binding site is contributed by Lys-125. Glu-126 lines the NADPH pocket. Mn(2+) is bound at residue Asp-148. 4 residues coordinate 1-deoxy-D-xylulose 5-phosphate: Ser-149, Glu-150, Ser-174, and His-197. Glu-150 serves as a coordination point for Mn(2+). An NADPH-binding site is contributed by Gly-203. Ser-210, Asn-215, Lys-216, and Glu-219 together coordinate 1-deoxy-D-xylulose 5-phosphate. Glu-219 lines the Mn(2+) pocket.

It belongs to the DXR family. Mg(2+) is required as a cofactor. It depends on Mn(2+) as a cofactor.

It catalyses the reaction 2-C-methyl-D-erythritol 4-phosphate + NADP(+) = 1-deoxy-D-xylulose 5-phosphate + NADPH + H(+). Its pathway is isoprenoid biosynthesis; isopentenyl diphosphate biosynthesis via DXP pathway; isopentenyl diphosphate from 1-deoxy-D-xylulose 5-phosphate: step 1/6. Catalyzes the NADPH-dependent rearrangement and reduction of 1-deoxy-D-xylulose-5-phosphate (DXP) to 2-C-methyl-D-erythritol 4-phosphate (MEP). This is 1-deoxy-D-xylulose 5-phosphate reductoisomerase from Streptomyces avermitilis (strain ATCC 31267 / DSM 46492 / JCM 5070 / NBRC 14893 / NCIMB 12804 / NRRL 8165 / MA-4680).